We begin with the raw amino-acid sequence, 445 residues long: Transcription termination factor MTERF15, mitochondrial (445 aa).

A mitochondrion-targeting transit peptide spans 1-25 (MASKLKTFINLRDYPITLFNQIRSL).

The protein belongs to the mTERF family.

The protein localises to the mitochondrion. Its function is as follows. Transcription termination factor required for mitochondrial NAD2 intron 3 splicing and normal membrane respiratory chain Complex I activity. Essential for normal plant growth and development. Binds to RNA but not to double-stranded DNA. The sequence is that of Transcription termination factor MTERF15, mitochondrial from Arabidopsis thaliana (Mouse-ear cress).